The sequence spans 312 residues: DNA-directed RNA polymerase subunit alpha (312 aa).

Residues 1 to 226 (MIEFKKPNIT…EHFKAFESAD (226 aa)) form an alpha N-terminal domain (alpha-NTD) region. Positions 243–312 (KEKKLEMTIE…DLGLSLRQED (70 aa)) are alpha C-terminal domain (alpha-CTD).

Belongs to the RNA polymerase alpha chain family. Homodimer. The RNAP catalytic core consists of 2 alpha, 1 beta, 1 beta' and 1 omega subunit. When a sigma factor is associated with the core the holoenzyme is formed, which can initiate transcription.

It carries out the reaction RNA(n) + a ribonucleoside 5'-triphosphate = RNA(n+1) + diphosphate. In terms of biological role, DNA-dependent RNA polymerase catalyzes the transcription of DNA into RNA using the four ribonucleoside triphosphates as substrates. The sequence is that of DNA-directed RNA polymerase subunit alpha from Lactobacillus delbrueckii subsp. bulgaricus (strain ATCC 11842 / DSM 20081 / BCRC 10696 / JCM 1002 / NBRC 13953 / NCIMB 11778 / NCTC 12712 / WDCM 00102 / Lb 14).